The primary structure comprises 200 residues: HTH-type transcriptional regulator BetI (200 aa).

The HTH tetR-type domain maps to 8 to 68 (DIRKPQLVQA…ETMREILRQL (61 aa)). The segment at residues 31 to 50 (SIALISKEAGVSTGIINHYF) is a DNA-binding region (H-T-H motif).

Its pathway is amine and polyamine biosynthesis; betaine biosynthesis via choline pathway [regulation]. Its function is as follows. Repressor involved in the biosynthesis of the osmoprotectant glycine betaine. It represses transcription of the choline transporter BetT and the genes of BetAB involved in the synthesis of glycine betaine. The sequence is that of HTH-type transcriptional regulator BetI from Vibrio atlanticus (strain LGP32) (Vibrio splendidus (strain Mel32)).